The following is a 214-amino-acid chain: Redox-sensing transcriptional repressor Rex (214 aa).

Residues 17–56 (KYHRYLEELLKSDVDRISSKELSEKIGFTASQIRQDLNCF) constitute a DNA-binding region (H-T-H motif). 91-96 (GAGNIG) provides a ligand contact to NAD(+).

Belongs to the transcriptional regulatory Rex family. In terms of assembly, homodimer.

Its subcellular location is the cytoplasm. Its function is as follows. Modulates transcription in response to changes in cellular NADH/NAD(+) redox state. The polypeptide is Redox-sensing transcriptional repressor Rex (Clostridium acetobutylicum (strain ATCC 824 / DSM 792 / JCM 1419 / IAM 19013 / LMG 5710 / NBRC 13948 / NRRL B-527 / VKM B-1787 / 2291 / W)).